A 101-amino-acid chain; its full sequence is Ferredoxin Fdx2 (101 aa).

4Fe-4S ferredoxin-type domains follow at residues 1–29 (MATYITEDCINCGACEPECPNEAISEGDE) and 31–64 (YVIDPELCTECVGFYDHEACQAVCPVECCLPNPQ). Residues Cys9, Cys12, Cys15, Cys19, Cys38, Cys41, Cys50, and Cys54 each contribute to the [4Fe-4S] cluster site.

It depends on [4Fe-4S] cluster as a cofactor.

Ferredoxins are iron-sulfur proteins that transfer electrons in a wide variety of metabolic reactions. Fdx2 can receive electrons from both FdR_A and FdR_B ferredoxin reductases, with a preference for FdR_B compared with FdR_A, and transfer the electrons to the cytochrome P450 CYP260A1. In Sorangium cellulosum (strain So ce56) (Polyangium cellulosum (strain So ce56)), this protein is Ferredoxin Fdx2.